Consider the following 159-residue polypeptide: Lipoprotein LpqH (159 aa).

The N-terminal stretch at 1-21 is a signal peptide; it reads MKRGLTVAVAGAAILVAGLSG. Cysteine 22 carries the N-palmitoyl cysteine lipid modification. A lipid anchor (S-diacylglycerol cysteine) is attached at cysteine 22. A disordered region spans residues 24–51; the sequence is SNKSTTGSGETTTAAGTTASPGAASGPK. The span at 27-49 shows a compositional bias: low complexity; that stretch reads STTGSGETTTAAGTTASPGAASG.

The protein belongs to the mycobacterial 19 kDa antigen family. Post-translationally, modified by Lgt on Cys-22 with an S-linked diacylglycerol with a mixture of C16, C18 and C19 fatty acids, signal peptide is removed by LspA, modifed by Lnt with an amide-linked mixture of C16 and C19 fatty acids.

It localises to the cell membrane. In terms of biological role, might be involved in ligand transport. A host TLR2 agonist, modifies host gene expression in response to pathogen. This is Lipoprotein LpqH (lpqH) from Mycobacterium tuberculosis (strain CDC 1551 / Oshkosh).